Consider the following 516-residue polypeptide: 2-isopropylmalate synthase (516 aa).

Residues 5–267 (VIIFDTTLRD…TTGIKHDEIS (263 aa)) form the Pyruvate carboxyltransferase domain. Mn(2+) contacts are provided by D14, H202, H204, and N238. Positions 392-516 (KLNYLSVQSG…IKQKKSVATV (125 aa)) are regulatory domain.

It belongs to the alpha-IPM synthase/homocitrate synthase family. LeuA type 1 subfamily. Homodimer. It depends on Mn(2+) as a cofactor.

Its subcellular location is the cytoplasm. The enzyme catalyses 3-methyl-2-oxobutanoate + acetyl-CoA + H2O = (2S)-2-isopropylmalate + CoA + H(+). It participates in amino-acid biosynthesis; L-leucine biosynthesis; L-leucine from 3-methyl-2-oxobutanoate: step 1/4. Catalyzes the condensation of the acetyl group of acetyl-CoA with 3-methyl-2-oxobutanoate (2-ketoisovalerate) to form 3-carboxy-3-hydroxy-4-methylpentanoate (2-isopropylmalate). The polypeptide is 2-isopropylmalate synthase (Vibrio cholerae serotype O1 (strain ATCC 39315 / El Tor Inaba N16961)).